The sequence spans 745 residues: Arf-GAP with coiled-coil, ANK repeat and PH domain-containing protein 1 (745 aa).

One can recognise a BAR domain in the interval M1–Q226. Positions M1 to L382 are required for formation of endosomal tubules when overexpressed with PIP5K1C. The region spanning G265–A360 is the PH domain. The Arf-GAP domain occupies G405–R527. The tract at residues G405 to L745 is required for interaction with GULP1. The C4-type zinc-finger motif lies at C420–C443. At Y485 the chain carries 3'-nitrotyrosine. The prevents interaction with ITGB1 when S-554 is not phosphorylated stretch occupies residues E525–L567. Positions E525–S569 are disordered. A compositionally biased stretch (pro residues) spans R537 to P546. S555 is modified (phosphoserine; by PKB). ANK repeat units lie at residues E607–Q640, Q644–V673, and E677–A707.

Banana-shaped homodimer laterally assembling into tetramers, the tetramers further pack helically onto the membrane. Interacts with GTP-bound ARF6. Interacts with third cytoplasmic loop of SLC2A4/GLUT4. Interacts with CLTC. Interacts with GULP1. Forms a complex with GDP-bound ARF6 and GULP1. Interacts with ITGB1; required for ITGB1 recycling. Post-translationally, phosphorylation at Ser-555 by PKB is required for interaction with ITGB1, export of ITGB1 from recycling endosomes to the cell surface and ITGB1-dependent cell migration.

It localises to the recycling endosome membrane. With respect to regulation, GAP activity stimulated by phosphatidylinositol 4,5-bisphosphate (PIP2) and phosphatidic acid. Its function is as follows. GTPase-activating protein (GAP) for ADP ribosylation factor 6 (ARF6) required for clathrin-dependent export of proteins from recycling endosomes to trans-Golgi network and cell surface. Required for regulated export of ITGB1 from recycling endosomes to the cell surface and ITGB1-dependent cell migration. In Bos taurus (Bovine), this protein is Arf-GAP with coiled-coil, ANK repeat and PH domain-containing protein 1 (ACAP1).